Consider the following 156-residue polypeptide: SsrA-binding protein (156 aa).

Belongs to the SmpB family.

Its subcellular location is the cytoplasm. Its function is as follows. Required for rescue of stalled ribosomes mediated by trans-translation. Binds to transfer-messenger RNA (tmRNA), required for stable association of tmRNA with ribosomes. tmRNA and SmpB together mimic tRNA shape, replacing the anticodon stem-loop with SmpB. tmRNA is encoded by the ssrA gene; the 2 termini fold to resemble tRNA(Ala) and it encodes a 'tag peptide', a short internal open reading frame. During trans-translation Ala-aminoacylated tmRNA acts like a tRNA, entering the A-site of stalled ribosomes, displacing the stalled mRNA. The ribosome then switches to translate the ORF on the tmRNA; the nascent peptide is terminated with the 'tag peptide' encoded by the tmRNA and targeted for degradation. The ribosome is freed to recommence translation, which seems to be the essential function of trans-translation. In Clostridium perfringens (strain 13 / Type A), this protein is SsrA-binding protein.